The following is a 505-amino-acid chain: Deoxyguanosinetriphosphate triphosphohydrolase (505 aa).

The HD domain occupies 66-273; sequence RLTHSMEVQQ…MEAADDISYC (208 aa).

The protein belongs to the dGTPase family. Type 1 subfamily. In terms of assembly, homotetramer. Mg(2+) is required as a cofactor.

The catalysed reaction is dGTP + H2O = 2'-deoxyguanosine + triphosphate + H(+). Functionally, dGTPase preferentially hydrolyzes dGTP over the other canonical NTPs. This Shigella boydii serotype 4 (strain Sb227) protein is Deoxyguanosinetriphosphate triphosphohydrolase.